The primary structure comprises 130 residues: Anti-adapter protein IraD (130 aa).

Belongs to the GpW/Gp25 family. IraD subfamily. In terms of assembly, interacts with RssB.

The protein localises to the cytoplasm. Functionally, inhibits RpoS proteolysis by regulating RssB activity, thereby increasing the stability of the sigma stress factor RpoS during oxidative stress. Its effect on RpoS stability is due to its interaction with RssB, which probably blocks the interaction of RssB with RpoS, and the consequent delivery of the RssB-RpoS complex to the ClpXP protein degradation pathway. This chain is Anti-adapter protein IraD, found in Shigella boydii serotype 4 (strain Sb227).